We begin with the raw amino-acid sequence, 279 residues long: uncharacterized protein (279 aa).

Positions 233–279 are disordered; the sequence is NDHQLHDSPLCSDVSDSTSNNNYDESLNFSNDNNNSSFNDFDDDNFI. A compositionally biased stretch (polar residues) spans 246-259; the sequence is VSDSTSNNNYDESL. The segment covering 260–271 has biased composition (low complexity); that stretch reads NFSNDNNNSSFN.

This is an uncharacterized protein from Buchnera aphidicola subsp. Baizongia pistaciae (strain Bp).